The chain runs to 389 residues: Chitinase-3-like protein 1 (389 aa).

An N-terminal signal peptide occupies residues 1-29 (MHTSTEARMGMRAALTGFAVLMLLQSCSA). Residues 30-389 (YKLVCYFTSW…LTNAIKDALA (360 aa)) form the GH18 domain. A disulfide bridge links C34 with C59. The N-linked (GlcNAc...) asparagine glycan is linked to N68. Residues 79–80 (EW), 106–109 (GGWK), Y150, and 213–216 (MTYD) each bind chitin. A disulfide bridge links C309 with C372. The important for AKT1 activation and IL8 production stretch occupies residues 333-347 (QWVGYEDKESVKNKV). W361 is a chitin binding site.

It belongs to the glycosyl hydrolase 18 family. As to quaternary structure, monomer. Detected in lung in pulmonary macrophages and alveolar type 2 cells and in bronchoalveolar lavage (BAL) fluids. Expressed in mammary tumor cells (at protein level). Expressed in lung. Not detected in non-inflammatory colon.

It localises to the secreted. It is found in the extracellular space. Its subcellular location is the cytoplasm. The protein resides in the endoplasmic reticulum. Functionally, carbohydrate-binding lectin with a preference for chitin. Has no chitinase activity. May play a role in tissue remodeling and in the capacity of cells to respond to and cope with changes in their environment. Plays a role in T-helper cell type 2 (Th2) inflammatory response and IL-13-induced inflammation, regulating allergen sensitization, inflammatory cell apoptosis, dendritic cell accumulation and M2 macrophage differentiation. Facilitates invasion of pathogenic enteric bacteria into colonic mucosa and lymphoid organs. Mediates activation of AKT1 signaling pathway and subsequent IL8 production in colonic epithelial cells. Regulates antibacterial responses in lung by contributing to macrophage bacterial killing, controlling bacterial dissemination and augmenting host tolerance. Also regulates hyperoxia-induced injury, inflammation and epithelial apoptosis in lung. This chain is Chitinase-3-like protein 1 (Chi3l1), found in Mus musculus (Mouse).